We begin with the raw amino-acid sequence, 249 residues long: Mitochondrial intermembrane space import and assembly protein 40 (249 aa).

The N-terminal 22 residues, Met-1–Phe-22, are a transit peptide targeting the mitochondrion. Residues Ser-23–Asn-36 lie on the Mitochondrial matrix side of the membrane. A helical; Signal-anchor for type II membrane protein transmembrane segment spans residues Met-37–Leu-55. At Asn-56–Lys-249 the chain is on the mitochondrial intermembrane side. The span at Lys-95–Glu-127 shows a compositional bias: basic and acidic residues. The segment at Lys-95–Asn-136 is disordered. 3 disulfide bridges follow: Cys-146-Cys-148, Cys-157-Cys-190, and Cys-167-Cys-180. The region spanning His-154–Tyr-198 is the CHCH domain. 2 short sequence motifs (cx9C motif) span residues Cys-157–Cys-167 and Cys-180–Cys-190. The interval Leu-202–Lys-249 is disordered. Residues Asp-232 to Lys-249 are compositionally biased toward basic and acidic residues.

In terms of assembly, monomer. Cu(2+) serves as cofactor. Zn(2+) is required as a cofactor.

Its subcellular location is the mitochondrion inner membrane. Required for the import and folding of small cysteine-containing proteins (small Tim) in the mitochondrial intermembrane space (IMS). Forms a redox cycle with ERV1 that involves a disulfide relay system. Precursor proteins to be imported into the IMS are translocated in their reduced form into the mitochondria. The oxidized form of MIA40 forms a transient intermolecular disulfide bridge with the reduced precursor protein, resulting in oxidation of the precursor protein that now contains an intramolecular disulfide bond and is able to undergo folding in the IMS. The chain is Mitochondrial intermembrane space import and assembly protein 40 (MIA40) from Debaryomyces hansenii (strain ATCC 36239 / CBS 767 / BCRC 21394 / JCM 1990 / NBRC 0083 / IGC 2968) (Yeast).